The primary structure comprises 85 residues: Type 3 secretion system needle filament protein (85 aa).

The stretch at 13-41 (LDTVANALKEQANAANKDVNDAIKALQGT) forms a coiled coil.

The core secretion machinery of the T3SS is composed of approximately 20 different proteins, including cytoplasmic components, a base, an export apparatus and a needle. This subunit polymerizes and forms the helical needle filament. Forms a stable heterotrimeric complex with PscE and PscG in the cytoplasm, blocking it in a monomeric state and preventing its polymerization.

The protein resides in the secreted. Its subcellular location is the cell surface. Component of the type III secretion system (T3SS), also called injectisome, which is used to inject bacterial effector proteins into eukaryotic host cells, facilitating the establishment and dissemination of infection. PscF/SctF forms the external needle filament that protrudes from the bacterial surface. This chain is Type 3 secretion system needle filament protein, found in Pseudomonas aeruginosa (strain ATCC 15692 / DSM 22644 / CIP 104116 / JCM 14847 / LMG 12228 / 1C / PRS 101 / PAO1).